A 398-amino-acid polypeptide reads, in one-letter code: Na(+)/H(+) antiporter NhaA (398 aa).

Transmembrane regions (helical) follow at residues 19–39 (IGGI…NSPG), 64–84 (LLLW…GLEL), 99–119 (IILP…IYLA), 130–150 (GWAI…SLLG), 159–179 (ILLT…IACF), 182–202 (NDIY…LFIV), 222–242 (IAML…AMFI), 266–286 (ATFI…LTNI), 299–319 (IALG…WVGV), 337–357 (GMSA…SLAF), and 370–390 (LGII…LNKT).

Belongs to the NhaA Na(+)/H(+) (TC 2.A.33) antiporter family.

Its subcellular location is the cell inner membrane. The enzyme catalyses Na(+)(in) + 2 H(+)(out) = Na(+)(out) + 2 H(+)(in). Na(+)/H(+) antiporter that extrudes sodium in exchange for external protons. The sequence is that of Na(+)/H(+) antiporter NhaA from Desulfotalea psychrophila (strain LSv54 / DSM 12343).